Reading from the N-terminus, the 1436-residue chain is DNA-directed RNA polymerase subunit beta (1436 aa).

The protein belongs to the RNA polymerase beta chain family. As to quaternary structure, the RNAP catalytic core consists of 2 alpha, 1 beta, 1 beta' and 1 omega subunit. When a sigma factor is associated with the core the holoenzyme is formed, which can initiate transcription.

The enzyme catalyses RNA(n) + a ribonucleoside 5'-triphosphate = RNA(n+1) + diphosphate. DNA-dependent RNA polymerase catalyzes the transcription of DNA into RNA using the four ribonucleoside triphosphates as substrates. The chain is DNA-directed RNA polymerase subunit beta from Wolbachia pipientis.